The sequence spans 240 residues: Probable transcriptional regulatory protein VFMJ11_A0186 (240 aa).

Belongs to the TACO1 family.

Its subcellular location is the cytoplasm. This chain is Probable transcriptional regulatory protein VFMJ11_A0186, found in Aliivibrio fischeri (strain MJ11) (Vibrio fischeri).